A 632-amino-acid chain; its full sequence is Dihydrolipoyllysine-residue acetyltransferase component of pyruvate dehydrogenase complex, mitochondrial (632 aa).

A mitochondrion-targeting transit peptide spans 1–77; it reads MWRVCARRVQ…LLGSPSRRSY (77 aa). 2 Lipoyl-binding domains span residues 82-158 and 208-284; these read HQKV…CITV and HMQI…CIIV. Residue Ser-91 is modified to Phosphoserine. N6-lipoyllysine occurs at positions 123 and 249. A Peripheral subunit-binding (PSBD) domain is found at 342–379; the sequence is FVSPLAKKLAAEKGIDLTQVKGTGPEGRIIKKDIDSFV. CoA is bound at residue Arg-446. N6-acetyllysine is present on Lys-451. Lys-458 is subject to N6-succinyllysine. Ser-460 contributes to the CoA binding site. At Lys-532 the chain carries N6-succinyllysine. CoA is bound by residues Ser-551, Asn-552, and Gly-576. Catalysis depends on residues His-605 and Asp-609.

It belongs to the 2-oxoacid dehydrogenase family. In terms of assembly, part of the pyruvate dehydrogenase complex (PDHc) that is a multi-enzyme complex composed of multiple copies of three enzymes, pyruvate dehydrogenase (subunits PDH1A and PDHB, E1 component), dihydrolipoamide acetyltransferase (DLAT, E2 component), and dihydrolipoamide dehydrogenase (DLD, E3 component) to which is added an additional protein the E3-binding protein (PDHX, E3BP). In terms of structural architecture, the E2 and E3BP components assemble into a 60meric central core with icosahedral symmetry. The central core is decorated with E1 and E3 proteins. Currently, two alternative models for the E2:E3BP stoichiometry are considered as being either 48:12 (E2(48)-E3BP(12)) or 40:20 (E2(40)-E3BP(20)). Interacts with PDK2 and PDK3. Interacts with SIRT4. Interacts with PDHB. The cofactor is (R)-lipoate. In terms of processing, delipoylated at Lys-123 and Lys-249 by SIRT4, delipoylation decreases the PHD complex activity. Expressed in flagella of epididymal sperm.

Its subcellular location is the mitochondrion matrix. It carries out the reaction N(6)-[(R)-dihydrolipoyl]-L-lysyl-[protein] + acetyl-CoA = N(6)-[(R)-S(8)-acetyldihydrolipoyl]-L-lysyl-[protein] + CoA. Its function is as follows. As part of the pyruvate dehydrogenase complex, catalyzes the transfers of an acetyl group to a lipoic acid moiety. The pyruvate dehydrogenase complex, catalyzes the overall conversion of pyruvate to acetyl-CoA and CO(2), and thereby links cytoplasmic glycolysis and the mitochondrial tricarboxylic acid (TCA) cycle. This Rattus norvegicus (Rat) protein is Dihydrolipoyllysine-residue acetyltransferase component of pyruvate dehydrogenase complex, mitochondrial.